A 296-amino-acid chain; its full sequence is tRNA dimethylallyltransferase (296 aa).

An ATP-binding site is contributed by 2-9; that stretch reads GPTASGKT. 4–9 lines the substrate pocket; that stretch reads TASGKT. Interaction with substrate tRNA stretches follow at residues 27 to 30, 151 to 155, and 232 to 237; these read DSAL, QRLSR, and RCVGYR.

Belongs to the IPP transferase family. In terms of assembly, monomer. It depends on Mg(2+) as a cofactor.

It catalyses the reaction adenosine(37) in tRNA + dimethylallyl diphosphate = N(6)-dimethylallyladenosine(37) in tRNA + diphosphate. Functionally, catalyzes the transfer of a dimethylallyl group onto the adenine at position 37 in tRNAs that read codons beginning with uridine, leading to the formation of N6-(dimethylallyl)adenosine (i(6)A). The protein is tRNA dimethylallyltransferase of Shewanella frigidimarina (strain NCIMB 400).